Reading from the N-terminus, the 505-residue chain is Monocarboxylate transporter 6 (505 aa).

At M1–L17 the chain is on the cytoplasmic side. The helical transmembrane segment at L18–F38 threads the bilayer. Residues T39–S53 lie on the Extracellular side of the membrane. The helical transmembrane segment at W54–V74 threads the bilayer. The Cytoplasmic portion of the chain corresponds to G75–R80. The chain crosses the membrane as a helical span at residues V81 to H101. Residues N102–A110 are Extracellular-facing. The chain crosses the membrane as a helical span at residues G111 to F131. Topologically, residues Y132–R137 are cytoplasmic. The chain crosses the membrane as a helical span at residues V138–L158. The Extracellular portion of the chain corresponds to S159–T171. Residues F172–V192 form a helical membrane-spanning segment. Residues A193–C239 lie on the Cytoplasmic side of the membrane. A helical membrane pass occupies residues V240 to V260. Residues P261 to A274 are Extracellular-facing. The chain crosses the membrane as a helical span at residues L275–A295. The Cytoplasmic segment spans residues G296–K305. The helical transmembrane segment at Y306 to G326 threads the bilayer. Residues D327–W329 are Extracellular-facing. A helical transmembrane segment spans residues V330–F350. Topologically, residues Q351–G367 are cytoplasmic. The chain crosses the membrane as a helical span at residues L368 to L388. The Extracellular segment spans residues D389–Y396. The chain crosses the membrane as a helical span at residues V397–Y417. Residues A418–T505 lie on the Cytoplasmic side of the membrane. A disordered region spans residues K443–P464.

The protein belongs to the major facilitator superfamily. Monocarboxylate porter (TC 2.A.1.13) family. Highly expressed in kidney.

The protein resides in the cell membrane. Proton-linked monocarboxylate transporter. Catalyzes the rapid transport across the plasma membrane of many monocarboxylates such as lactate, pyruvate, branched-chain oxo acids derived from leucine, valine and isoleucine, and the ketone bodies acetoacetate, beta-hydroxybutyrate and acetate. In Homo sapiens (Human), this protein is Monocarboxylate transporter 6 (SLC16A5).